Here is a 178-residue protein sequence, read N- to C-terminus: Fatty-acid and retinol-binding protein 1 (178 aa).

An N-terminal signal peptide occupies residues 1 to 16; the sequence is MYHQLILMALIGVIMA. N-linked (GlcNAc...) asparagine glycosylation is found at Asn44 and Asn75. 2 coiled-coil regions span residues 67–89 and 122–154; these read DAAL…ELRN and QKLD…LKAT. Residue Asn157 is glycosylated (N-linked (GlcNAc...) asparagine).

It belongs to the fatty-acid and retinol-binding protein (FARBP) family. N-glycosylated.

The protein resides in the secreted. Binds retinol and different fatty acids. The chain is Fatty-acid and retinol-binding protein 1 from Onchocerca ochengi (Filarial nematode worm).